Consider the following 471-residue polypeptide: Methylenetetrahydrofolate--tRNA-(uracil-5-)-methyltransferase TrmFO (471 aa).

Residue 13–18 (GGGLAG) coordinates FAD.

This sequence belongs to the MnmG family. TrmFO subfamily. Requires FAD as cofactor.

Its subcellular location is the cytoplasm. The enzyme catalyses uridine(54) in tRNA + (6R)-5,10-methylene-5,6,7,8-tetrahydrofolate + NADH + H(+) = 5-methyluridine(54) in tRNA + (6S)-5,6,7,8-tetrahydrofolate + NAD(+). The catalysed reaction is uridine(54) in tRNA + (6R)-5,10-methylene-5,6,7,8-tetrahydrofolate + NADPH + H(+) = 5-methyluridine(54) in tRNA + (6S)-5,6,7,8-tetrahydrofolate + NADP(+). Its function is as follows. Catalyzes the folate-dependent formation of 5-methyl-uridine at position 54 (M-5-U54) in all tRNAs. This chain is Methylenetetrahydrofolate--tRNA-(uracil-5-)-methyltransferase TrmFO, found in Azorhizobium caulinodans (strain ATCC 43989 / DSM 5975 / JCM 20966 / LMG 6465 / NBRC 14845 / NCIMB 13405 / ORS 571).